Consider the following 414-residue polypeptide: Membrane protein UL43 (414 aa).

A run of 6 helical transmembrane segments spans residues 39 to 59 (GFAH…VVLS), 61 to 81 (GPYA…LGFL), 96 to 116 (AWLR…GEAG), 121 to 141 (VPGP…LLVL), 148 to 168 (LFLL…VGGL), and 184 to 204 (AAAL…GDSF). The disordered stretch occupies residues 225 to 253 (PRYAPEDAERPTDHGPLLPSTHHQRSPRV). Basic and acidic residues predominate over residues 228–237 (APEDAERPTD). The next 2 membrane-spanning stretches (helical) occupy residues 339 to 359 (GLMF…AVWI) and 383 to 403 (ATLR…GVLV).

The protein belongs to the alphaherpesvirinae HHV-1 UL43 family.

It is found in the membrane. In Homo sapiens (Human), this protein is Membrane protein UL43.